The sequence spans 875 residues: Translation initiation factor IF-2 (875 aa).

3 disordered regions span residues 1 to 20 (MSDSDKKPTLGRRPLGLKTA), 47 to 102 (LMGR…LREA), and 126 to 246 (EEER…DRRG). Positions 54 to 66 (AAPTAAPAAAATP) are enriched in low complexity. Over residues 67–85 (APTPVAPPPPPPPPPPPPS) the composition is skewed to pro residues. Composition is skewed to basic and acidic residues over residues 88–102 (RETRQEMQVRLLREA) and 126–140 (EEERRRAEEKARAEA). Composition is skewed to low complexity over residues 141 to 195 (EAAA…PAAP) and 202 to 221 (PAAPAVPAPRRFTPVAPAAP). Residues 223 to 246 (KRPELAAKKPAHPQRDRKTEDRRG) show a composition bias toward basic and acidic residues. In terms of domain architecture, tr-type G spans 374–544 (ARPPVVTIMG…LLQAELLELK (171 aa)). The G1 stretch occupies residues 383–390 (GHVDHGKT). 383-390 (GHVDHGKT) serves as a coordination point for GTP. The G2 stretch occupies residues 408-412 (GITQH). Residues 430-433 (DTPG) are G3. Residues 430-434 (DTPGH) and 484-487 (TKAD) contribute to the GTP site. Residues 484 to 487 (TKAD) form a G4 region. Positions 520-522 (SAK) are G5.

This sequence belongs to the TRAFAC class translation factor GTPase superfamily. Classic translation factor GTPase family. IF-2 subfamily.

It localises to the cytoplasm. One of the essential components for the initiation of protein synthesis. Protects formylmethionyl-tRNA from spontaneous hydrolysis and promotes its binding to the 30S ribosomal subunits. Also involved in the hydrolysis of GTP during the formation of the 70S ribosomal complex. This Novosphingobium aromaticivorans (strain ATCC 700278 / DSM 12444 / CCUG 56034 / CIP 105152 / NBRC 16084 / F199) protein is Translation initiation factor IF-2.